The following is a 386-amino-acid chain: Lipoyl synthase, mitochondrial (386 aa).

Residues Cys115, Cys120, Cys126, Cys146, Cys150, Cys153, and Ser362 each contribute to the [4Fe-4S] cluster site. The region spanning 131 to 351 (ETGTATATIM…QKLGMEMGFR (221 aa)) is the Radical SAM core domain.

It belongs to the radical SAM superfamily. Lipoyl synthase family. [4Fe-4S] cluster is required as a cofactor.

Its subcellular location is the mitochondrion. It catalyses the reaction [[Fe-S] cluster scaffold protein carrying a second [4Fe-4S](2+) cluster] + N(6)-octanoyl-L-lysyl-[protein] + 2 oxidized [2Fe-2S]-[ferredoxin] + 2 S-adenosyl-L-methionine + 4 H(+) = [[Fe-S] cluster scaffold protein] + N(6)-[(R)-dihydrolipoyl]-L-lysyl-[protein] + 4 Fe(3+) + 2 hydrogen sulfide + 2 5'-deoxyadenosine + 2 L-methionine + 2 reduced [2Fe-2S]-[ferredoxin]. It functions in the pathway protein modification; protein lipoylation via endogenous pathway; protein N(6)-(lipoyl)lysine from octanoyl-[acyl-carrier-protein]: step 2/2. Catalyzes the radical-mediated insertion of two sulfur atoms into the C-6 and C-8 positions of the octanoyl moiety bound to the lipoyl domains of lipoate-dependent enzymes, thereby converting the octanoylated domains into lipoylated derivatives. The protein is Lipoyl synthase, mitochondrial of Picea sitchensis (Sitka spruce).